The chain runs to 198 residues: TATA-box-binding protein (198 aa).

2 consecutive repeat copies span residues 14–90 and 105–181.

This sequence belongs to the TBP family.

General factor that plays a role in the activation of archaeal genes transcribed by RNA polymerase. Binds specifically to the TATA box promoter element which lies close to the position of transcription initiation. The protein is TATA-box-binding protein of Saccharolobus shibatae (strain ATCC 51178 / DSM 5389 / JCM 8931 / NBRC 15437 / B12) (Sulfolobus shibatae).